Here is a 1208-residue protein sequence, read N- to C-terminus: Calmodulin-binding transcription activator 2 (1208 aa).

A DNA-binding region (CG-1) is located at residues 30–160 (RCPLLPPERL…YLNVPALEDC (131 aa)). The short motif at 78 to 86 (NRKKVKYRK) is the Nuclear localization signal element. Disordered regions lie at residues 269–328 (ISHS…SRGG), 366–418 (VGSE…PCPA), and 437–507 (QLGA…ELEP). The segment covering 275–288 (PEPPPLIAPLPPEL) has biased composition (pro residues). Composition is skewed to low complexity over residues 294-305 (SPSSSSSSSSSS) and 319-328 (TSRGGSSRGG). 2 stretches are compositionally biased toward pro residues: residues 371 to 380 (SAPPAPPSPA) and 464 to 476 (TVPPVPSSPPSSP). Residues 544–622 (DFSPEWSYPE…LSASVLFEYR (79 aa)) form the IPT/TIG domain. ANK repeat units lie at residues 717-750 (RGMSLLHLAAAQGYARLIETLSQWRSVETGSLDL), 762-792 (FSCTPLMWACALGHLEAAVLLFCWNRQALSI), and 796-826 (LGRLPLSVAHSRGHVRLARCLEELQRQELSV). Disordered stretches follow at residues 826–881 (VEHP…ASDI) and 908–936 (NSKEPAPSPCGPPLAQDNGAAPEDADSPP). Positions 829–853 (PLALSPPSSSPDTGLSSASSPSELS) are enriched in low complexity. IQ domains follow at residues 1054–1083 (LYEAARVIQTAFRKYKGRRLKEQQEVAAAV) and 1107–1136 (MTQAAILIQSKFRSYYEQKRFQQSRRAAVL). The tract at residues 1144–1166 (YRRRPGPPHRPSGPLPARNKGTF) is disordered.

The protein belongs to the CAMTA family. In terms of assembly, may interact with calmodulin.

It localises to the nucleus. In terms of biological role, transcription activator. May act as tumor suppressor. This is Calmodulin-binding transcription activator 2 (Camta2) from Mus musculus (Mouse).